The sequence spans 335 residues: Large ribosomal subunit protein uL10 (335 aa).

Positions 304-335 (GAAAPVEEAPVEEKKEEKKEEAAAPAGLGMLF) are disordered. The span at 314–325 (VEEKKEEKKEEA) shows a compositional bias: basic and acidic residues.

It belongs to the universal ribosomal protein uL10 family. As to quaternary structure, part of the 50S ribosomal subunit. Homodimer, it forms part of the ribosomal stalk which helps the ribosome interact with GTP-bound translation factors. Forms both a pentameric L10(L12)2(L12)2 and heptameric L10(L12)2(L12)2(L12)2 complex, where L10 forms an elongated spine to which the L12 dimers bind in a sequential fashion. The proportion of heptameric complexes increases during cell growth.

Its function is as follows. Forms part of the ribosomal stalk, playing a central role in the interaction of the ribosome with GTP-bound translation factors. The sequence is that of Large ribosomal subunit protein uL10 from Methanococcus maripaludis (strain DSM 14266 / JCM 13030 / NBRC 101832 / S2 / LL).